We begin with the raw amino-acid sequence, 447 residues long: Na(+)-translocating NADH-quinone reductase subunit A (447 aa).

This sequence belongs to the NqrA family. In terms of assembly, composed of six subunits; NqrA, NqrB, NqrC, NqrD, NqrE and NqrF.

It carries out the reaction a ubiquinone + n Na(+)(in) + NADH + H(+) = a ubiquinol + n Na(+)(out) + NAD(+). Functionally, NQR complex catalyzes the reduction of ubiquinone-1 to ubiquinol by two successive reactions, coupled with the transport of Na(+) ions from the cytoplasm to the periplasm. NqrA to NqrE are probably involved in the second step, the conversion of ubisemiquinone to ubiquinol. The chain is Na(+)-translocating NADH-quinone reductase subunit A from Cellvibrio japonicus (strain Ueda107) (Pseudomonas fluorescens subsp. cellulosa).